Consider the following 382-residue polypeptide: MTLQAAGIVTEYNPFHNGHAYQIAQARQKTGADVIVAAMSGNWVQRGEPAIMDKWQRTEAALAGGVDLVVELSGAAALQPAHLFAQGAIAVLATLKCQWLVFGTEHPDMDYDCLMAHLPSDPAIFKRFDQTYASLFQGYLREQTGITLSAANDILGFFYAVANQQQGQPLQLVPLARRGSQHNDTAVMQGTNYASATAIRAASLAGDWATVQPVVPAKTLALLQQESLISWADFWPLLRYQLISAPVTDMRQRYQITEGVEYRLKRAALEATTFADFMRIVKTKRYTYTRLQRQAAYLLLQALPEEMRPQPQYLRVLGYSKQGQAYLHQIKKHVALPLVSRANRDWQKGVGSLDDRLGALRTLVTGIPQDYGRIPIKKPDSE.

Residues 9-22 (VTEY…HAYQ), Gly-103, Asn-152, and Arg-177 contribute to the ATP site.

The protein belongs to the TmcAL family.

The protein resides in the cytoplasm. The enzyme catalyses cytidine(34) in elongator tRNA(Met) + acetate + ATP = N(4)-acetylcytidine(34) in elongator tRNA(Met) + AMP + diphosphate. Functionally, catalyzes the formation of N(4)-acetylcytidine (ac(4)C) at the wobble position of elongator tRNA(Met), using acetate and ATP as substrates. First activates an acetate ion to form acetyladenylate (Ac-AMP) and then transfers the acetyl group to tRNA to form ac(4)C34. This is tRNA(Met) cytidine acetate ligase from Levilactobacillus brevis (strain ATCC 367 / BCRC 12310 / CIP 105137 / JCM 1170 / LMG 11437 / NCIMB 947 / NCTC 947) (Lactobacillus brevis).